The chain runs to 109 residues: U-scoloptoxin(16)-Cw1a (109 aa).

The N-terminal stretch at 1 to 21 (MNAVFIVFLSAILSYPHESFA) is a signal peptide.

It belongs to the scoloptoxin-16 family. Post-translationally, contains 4 disulfide bonds. Expressed by the venom gland.

The protein resides in the secreted. The chain is U-scoloptoxin(16)-Cw1a from Cormocephalus westwoodi (Westwood's green centipede).